The chain runs to 233 residues: Small ribosomal subunit protein uS3 (233 aa).

Residues 28-96 (EFADNLDSDF…LRKVVADIAG (69 aa)) form the KH type-2 domain.

This sequence belongs to the universal ribosomal protein uS3 family. In terms of assembly, part of the 30S ribosomal subunit. Forms a tight complex with proteins S10 and S14.

Functionally, binds the lower part of the 30S subunit head. Binds mRNA in the 70S ribosome, positioning it for translation. The protein is Small ribosomal subunit protein uS3 of Shigella flexneri.